The following is a 437-amino-acid chain: Epsilon-sarcoglycan (437 aa).

Over 1–317 (MLLFWWWELG…LKSRDYYTDF (317 aa)) the chain is Extracellular. The N-linked (GlcNAc...) asparagine glycan is linked to N200. A helical transmembrane segment spans residues 318 to 338 (LVTLAVPSAVALVLFLILAYI). Over 339–437 (MCCRREGVEK…QQQTTGKWYP (99 aa)) the chain is Cytoplasmic.

Belongs to the sarcoglycan alpha/epsilon family. N-glycosylated. Post-translationally, ubiquitinated, leading to its degradation by the proteasome. As to expression, in both neural tissues including cerebellar cortex, striatum, cerebral cortex, thalamus and hippocampus, and non-neural tissues including quadriceps muscle, liver, kidney, spleen, lung, testis and heart. Widely distributed in the brain, with a robust signal obtained from regions with dense neuronal packing such as the pyramidal cell layer of the hippocampus, cerebellar molecular layer, and cerebral cortex. Levels are highest in kidney, moderate in brain and lung, and low in skeletal muscle, liver, spleen and testis.

The protein localises to the cell membrane. Its subcellular location is the sarcolemma. It is found in the cytoplasm. It localises to the cytoskeleton. The protein resides in the cell projection. The protein localises to the dendrite. Its subcellular location is the golgi apparatus. Component of the sarcoglycan complex, a subcomplex of the dystrophin-glycoprotein complex which forms a link between the F-actin cytoskeleton and the extracellular matrix. This chain is Epsilon-sarcoglycan, found in Rattus norvegicus (Rat).